A 330-amino-acid polypeptide reads, in one-letter code: Peroxidase N1 (330 aa).

The first 29 residues, 1–29, serve as a signal peptide directing secretion; the sequence is MEYYHHSINKMAMFMVILVLAIDVTMVLG. Position 30 is a pyrrolidone carboxylic acid (Gln30). 4 cysteine pairs are disulfide-bonded: Cys41–Cys117, Cys74–Cys79, Cys123–Cys326, and Cys201–Cys233. His72 serves as the catalytic Proton acceptor. Asp73, Val76, Gly78, Asp80, and Ser82 together coordinate Ca(2+). Residue Pro164 participates in substrate binding. Residue His194 coordinates heme b. Thr195 provides a ligand contact to Ca(2+). A glycan (N-linked (GlcNAc...) asparagine) is linked at Asn212. Ca(2+) contacts are provided by Asp246 and Asp254.

It belongs to the peroxidase family. Classical plant (class III) peroxidase subfamily. Ca(2+) is required as a cofactor. Requires heme b as cofactor. In terms of tissue distribution, expressed at a high level in roots and at a trace level in lower leaves. Not expressed in upper leaves, stems, flowers, seeds and shoot apices.

It is found in the secreted. It catalyses the reaction 2 a phenolic donor + H2O2 = 2 a phenolic radical donor + 2 H2O. Functionally, removal of H(2)O(2), oxidation of toxic reductants, biosynthesis and degradation of lignin, suberization, auxin catabolism, response to environmental stresses such as wounding, pathogen attack and oxidative stress. These functions might be dependent on each isozyme/isoform in each plant tissue. Can use NADH, NADPH and monolignols as substrates. The sequence is that of Peroxidase N1 from Nicotiana tabacum (Common tobacco).